The chain runs to 345 residues: Serine/arginine-rich splicing factor 6 (345 aa).

Positions 1-72 (MPRVYIGRLS…ERVIVEHARG (72 aa)) constitute an RRM 1 domain. Phosphoserine is present on residues serine 45, serine 81, and serine 84. The disordered stretch occupies residues 75-102 (RDRDGYSYGSRSGGGGYSSRRTSGRDKY). One can recognise an RRM 2 domain in the interval 110–183 (FRLIVENLSS…RNIRLIEDKP (74 aa)). An N6-acetyllysine modification is found at lysine 165. The segment at 176 to 345 (IRLIEDKPRT…RSRSRSSSRD (170 aa)) is disordered. A Glycyl lysine isopeptide (Lys-Gly) (interchain with G-Cter in SUMO2) cross-link involves residue lysine 182. Residues 185 to 250 (TSHRRSYSGS…RKSRSKSKSK (66 aa)) are compositionally biased toward basic residues. Basic and acidic residues-rich tracts occupy residues 264 to 273 (RSKDEYEKSR) and 282 to 293 (SPKENGKGDIKS). A phosphoserine mark is found at serine 299 and serine 301. Serine 305 is modified (phosphoserine; by DYRK1A). 2 positions are modified to phosphoserine: serine 316 and serine 318. Residues 323-345 (RASRSHSRSRSKSRSRSRSSSRD) are compositionally biased toward basic residues.

It belongs to the splicing factor SR family. Binds SREK1/SFRS12. Interacts with DYRK1A. Post-translationally, extensively phosphorylated on serine residues in the RS domain. Phosphorylated by DYRK1A, probably in the RS domain. Phosphorylation by DYRK1A modulates alternative splice site selection and inhibits the expression of MAPT/Tau exon 10.

The protein resides in the nucleus. Its subcellular location is the nucleus speckle. In terms of biological role, plays a role in constitutive splicing and modulates the selection of alternative splice sites. Plays a role in the alternative splicing of MAPT/Tau exon 10. Binds to alternative exons of TNC pre-mRNA and promotes the expression of alternatively spliced TNC. Plays a role in wound healing and in the regulation of keratinocyte differentiation and proliferation via its role in alternative splicing. The protein is Serine/arginine-rich splicing factor 6 (SRSF6) of Bos taurus (Bovine).